The primary structure comprises 235 residues: Phosphoribosylaminoimidazole-succinocarboxamide synthase (235 aa).

This sequence belongs to the SAICAR synthetase family.

The enzyme catalyses 5-amino-1-(5-phospho-D-ribosyl)imidazole-4-carboxylate + L-aspartate + ATP = (2S)-2-[5-amino-1-(5-phospho-beta-D-ribosyl)imidazole-4-carboxamido]succinate + ADP + phosphate + 2 H(+). It functions in the pathway purine metabolism; IMP biosynthesis via de novo pathway; 5-amino-1-(5-phospho-D-ribosyl)imidazole-4-carboxamide from 5-amino-1-(5-phospho-D-ribosyl)imidazole-4-carboxylate: step 1/2. The sequence is that of Phosphoribosylaminoimidazole-succinocarboxamide synthase from Nautilia profundicola (strain ATCC BAA-1463 / DSM 18972 / AmH).